Here is a 149-residue protein sequence, read N- to C-terminus: Transthyretin (149 aa).

Positions 1-20 (MAFHSLLLLCLAGLAFVSET) are cleaved as a signal peptide. Residue cysteine 32 is modified to Sulfocysteine. Position 37 (lysine 37) interacts with L-thyroxine. Position 64 is a 4-carboxyglutamate (glutamate 64). Glutamate 76 and serine 139 together coordinate L-thyroxine.

The protein belongs to the transthyretin family. Homotetramer. Dimer of dimers. In the homotetramer, subunits assemble around a central channel that can accommodate two ligand molecules. Interacts with RBP4. Sulfonation of the reactive cysteine Cys-32 enhances the stability of the native conformation of TTR, avoiding misassembly of the protein leading to amyloid formation.

It localises to the secreted. In terms of biological role, thyroid hormone-binding protein. Probably transports thyroxine from the bloodstream to the brain. The protein is Transthyretin (TTR) of Notamacropus eugenii (Tammar wallaby).